We begin with the raw amino-acid sequence, 664 residues long: DNA ligase (664 aa).

NAD(+) is bound by residues aspartate 31–aspartate 35, serine 80–leucine 81, and glutamate 110. The active-site N6-AMP-lysine intermediate is the lysine 112. NAD(+) contacts are provided by arginine 133 and glutamate 169. The 21-residue stretch at leucine 237–isoleucine 257 folds into the BRCT 1 domain. NAD(+) contacts are provided by lysine 284 and lysine 308. The Zn(2+) site is built by cysteine 402, cysteine 405, cysteine 420, and cysteine 426. Residues asparagine 586–glutamate 664 enclose the BRCT 2 domain.

The protein belongs to the NAD-dependent DNA ligase family. LigA subfamily. It depends on Mg(2+) as a cofactor. Mn(2+) is required as a cofactor.

The enzyme catalyses NAD(+) + (deoxyribonucleotide)n-3'-hydroxyl + 5'-phospho-(deoxyribonucleotide)m = (deoxyribonucleotide)n+m + AMP + beta-nicotinamide D-nucleotide.. DNA ligase that catalyzes the formation of phosphodiester linkages between 5'-phosphoryl and 3'-hydroxyl groups in double-stranded DNA using NAD as a coenzyme and as the energy source for the reaction. It is essential for DNA replication and repair of damaged DNA. This Christiangramia forsetii (strain DSM 17595 / CGMCC 1.15422 / KT0803) (Gramella forsetii) protein is DNA ligase.